The chain runs to 274 residues: Large ribosomal subunit protein uL2 (274 aa).

Positions 223 to 257 (VAMNPVDHPHGGGEGRTSGGRHPVTPWGIPTKGYK) are disordered.

Belongs to the universal ribosomal protein uL2 family. Part of the 50S ribosomal subunit. Forms a bridge to the 30S subunit in the 70S ribosome.

Its function is as follows. One of the primary rRNA binding proteins. Required for association of the 30S and 50S subunits to form the 70S ribosome, for tRNA binding and peptide bond formation. It has been suggested to have peptidyltransferase activity; this is somewhat controversial. Makes several contacts with the 16S rRNA in the 70S ribosome. The protein is Large ribosomal subunit protein uL2 of Geobacter sulfurreducens (strain ATCC 51573 / DSM 12127 / PCA).